A 115-amino-acid polypeptide reads, in one-letter code: NADH-ubiquinone oxidoreductase chain 3 (115 aa).

3 helical membrane-spanning segments follow: residues 3 to 23 (LVMALLTNTALASLLVLIAFW), 55 to 75 (FFLVAITFLLFDLEVALLLPL), and 86 to 106 (TMLIMALTLISLLAISLAYEW).

The protein belongs to the complex I subunit 3 family. Core subunit of respiratory chain NADH dehydrogenase (Complex I) which is composed of 45 different subunits. Interacts with TMEM186. Interacts with TMEM242.

Its subcellular location is the mitochondrion inner membrane. The catalysed reaction is a ubiquinone + NADH + 5 H(+)(in) = a ubiquinol + NAD(+) + 4 H(+)(out). Functionally, core subunit of the mitochondrial membrane respiratory chain NADH dehydrogenase (Complex I) which catalyzes electron transfer from NADH through the respiratory chain, using ubiquinone as an electron acceptor. Essential for the catalytic activity of complex I. This is NADH-ubiquinone oxidoreductase chain 3 from Hippopotamus amphibius (Hippopotamus).